A 506-amino-acid polypeptide reads, in one-letter code: Trans-cinnamate 4-monooxygenase (506 aa).

The helical transmembrane segment at 3–23 threads the bilayer; the sequence is LLLLEKALLGLFAAAVVAIAV. (E)-cinnamate contacts are provided by residues 213-218 and alanine 306; that span reads RSRLAQ. Cysteine 447 is a binding site for heme.

This sequence belongs to the cytochrome P450 family. It depends on heme as a cofactor.

The protein resides in the membrane. The enzyme catalyses (E)-cinnamate + reduced [NADPH--hemoprotein reductase] + O2 = (E)-4-coumarate + oxidized [NADPH--hemoprotein reductase] + H2O + H(+). It participates in phenylpropanoid metabolism; trans-4-coumarate biosynthesis; trans-4-coumarate from trans-cinnamate: step 1/1. Its function is as follows. Catalyzes the first oxidative step of the phenylpropanoid pathway in higher plants by transforming trans-cinnamate into p-coumarate. The compounds formed by this pathway are essential components for lignification, pollination, and defense against ultraviolet light, predators and pathogens. The sequence is that of Trans-cinnamate 4-monooxygenase (CYP73A2) from Ruta graveolens (Common rue).